We begin with the raw amino-acid sequence, 193 residues long: Ion-translocating oxidoreductase complex subunit A (193 aa).

Transmembrane regions (helical) follow at residues 5–25 (ALLF…FLGL), 39–59 (IGMG…SWLI), 62–82 (FILV…LVLA), 102–122 (LLGI…VVLL), 134–154 (TIYG…FAAI), and 171–191 (SIAL…TGLV).

The protein belongs to the NqrDE/RnfAE family. As to quaternary structure, the complex is composed of six subunits: RnfA, RnfB, RnfC, RnfD, RnfE and RnfG.

The protein localises to the cell inner membrane. Its function is as follows. Part of a membrane-bound complex that couples electron transfer with translocation of ions across the membrane. In Pectobacterium atrosepticum (strain SCRI 1043 / ATCC BAA-672) (Erwinia carotovora subsp. atroseptica), this protein is Ion-translocating oxidoreductase complex subunit A.